Here is an 819-residue protein sequence, read N- to C-terminus: Protein SCARECROW (819 aa).

Disordered regions lie at residues 6–49 (LFNG…HSER), 65–136 (HNNN…INNN), 212–231 (SQNNQTNRTNNNSSNNRNNT), and 393–420 (PLSTQQDQQHQLQQHPEDLAPATTTTTT). Low complexity predominate over residues 15 to 33 (TTPDETNNNSTSNSSNIST). Residues 79–98 (RTNNTSSLNCSLPATTQKGV) are compositionally biased toward polar residues. Low complexity predominate over residues 99–136 (TTTTTTTLASSGNNNNNNNNNNNYHYHNNNNNSIINNN). Residues 418-448 (TTTSAELALARKKKEEIKEQKKKDEEGLHLL) are a coiled coil. The GRAS domain maps to 438–806 (KKKDEEGLHL…LCLLTASAWR (369 aa)). The interval 445 to 507 (LHLLTLLLQC…RLVSSCLGIY (63 aa)) is leucine repeat I (LRI). Residues 452–456 (LQCAE) carry the LxCxE motif motif. The tract at residues 526–591 (FQVFNGISPF…GGPPYVRLTG (66 aa)) is VHIID. Positions 557-561 (VHIID) match the VHIID motif. Residues 601-633 (ATGKRLSDFANKLGLPFEFFPVAEKVGNIDVEK) form a leucine repeat II (LRII) region. A PFYRE region spans residues 642-729 (VAVHWLQHSL…QQLLSREIRN (88 aa)). Positions 732–806 (AVGGPSRSGE…LCLLTASAWR (75 aa)) are SAW.

This sequence belongs to the GRAS family. As to expression, expressed in shoot apical meristem, leaf primordia, between the cortex and the differentiating vessels in lower shoots and in root endodermis.

Its subcellular location is the nucleus. In terms of biological role, putative transcription factor involved in asymmetric cell division. This Pisum sativum (Garden pea) protein is Protein SCARECROW (SCR).